The following is a 1488-amino-acid chain: Chromosome partition protein MukB (1488 aa).

G34–S41 is a binding site for ATP. Coiled-coil stretches lie at residues L326–Q418, L444–H472, and R509–P602. The interval P666–R783 is flexible hinge. 3 coiled-coil regions span residues E835–E923, E977–G1116, and V1209–V1265. A disordered region spans residues A1049–R1074. Residues S1051 to H1065 are compositionally biased toward basic and acidic residues.

Belongs to the SMC family. MukB subfamily. In terms of assembly, homodimerization via its hinge domain. Binds to DNA via its C-terminal region. Interacts, and probably forms a ternary complex, with MukE and MukF via its C-terminal region. The complex formation is stimulated by calcium or magnesium. Interacts with tubulin-related protein FtsZ.

The protein resides in the cytoplasm. It is found in the nucleoid. Plays a central role in chromosome condensation, segregation and cell cycle progression. Functions as a homodimer, which is essential for chromosome partition. Involved in negative DNA supercoiling in vivo, and by this means organize and compact chromosomes. May achieve or facilitate chromosome segregation by condensation DNA from both sides of a centrally located replisome during cell division. The protein is Chromosome partition protein MukB of Salmonella typhi.